The following is a 492-amino-acid chain: Fascin-2 (492 aa).

The protein belongs to the fascin family. Expressed in the inner ear. Abundant in the utricle.

Its subcellular location is the cytoplasm. It localises to the cytoskeleton. The protein resides in the cell projection. It is found in the stereocilium. Acts as an actin bundling protein. May play a pivotal role in photoreceptor cell-specific events, such as disk morphogenesis. Important for maintaining functional hair-cell bundles in the inner ear. May stiffen the longer stereocilia of hair-cell bundles in the inner ear enabling better force transmission to tip links. The polypeptide is Fascin-2 (Fscn2) (Mus musculus (Mouse)).